The primary structure comprises 97 residues: uncharacterized protein (97 aa).

The signal sequence occupies residues 1 to 21 (MLLHGLGRMNIIFICFPSLAC).

This is an uncharacterized protein from Schizosaccharomyces pombe (strain 972 / ATCC 24843) (Fission yeast).